Here is a 215-residue protein sequence, read N- to C-terminus: Phosphoribosylglycinamide formyltransferase (215 aa).

Residues arginine 74, 99-102, and asparagine 116 each bind (6R)-10-formyltetrahydrofolate; that span reads MRIL. Histidine 118 serves as the catalytic Proton donor.

It belongs to the GART family.

The enzyme catalyses N(1)-(5-phospho-beta-D-ribosyl)glycinamide + (6R)-10-formyltetrahydrofolate = N(2)-formyl-N(1)-(5-phospho-beta-D-ribosyl)glycinamide + (6S)-5,6,7,8-tetrahydrofolate + H(+). It participates in purine metabolism; IMP biosynthesis via de novo pathway; N(2)-formyl-N(1)-(5-phospho-D-ribosyl)glycinamide from N(1)-(5-phospho-D-ribosyl)glycinamide (10-formyl THF route): step 1/1. Functionally, catalyzes the transfer of a formyl group from 10-formyltetrahydrofolate to 5-phospho-ribosyl-glycinamide (GAR), producing 5-phospho-ribosyl-N-formylglycinamide (FGAR) and tetrahydrofolate. This is Phosphoribosylglycinamide formyltransferase from Mycobacterium tuberculosis (strain CDC 1551 / Oshkosh).